The chain runs to 172 residues: Dehydratase cfoI (172 aa).

Residues His86 and His111 contribute to the active site.

Belongs to the scytalone dehydratase family. Homotrimer. Each subunit contains an active site, located in the central part of the hydrophobic core of the monomer, which functions independently.

It participates in secondary metabolite biosynthesis; flavonoid biosynthesis. In terms of biological role, cytochrome P450 monooxygenase; part of the gene cluster that mediates the biosynthesis of chlorflavonin, a fungal flavonoid with acetolactate synthase inhibitory activity. Within the pathway, cfoI is responsible for the hydroxylation of the flavonoid skeleton at position C3 with cfoF. The pathway begins with the PKS-NRPS hybrid synthetase cfoA that uses benzoic acid or p-hydroxybenzoic acid as a starter unit with four rounds of chain elongation using malonyl-CoA to form the chalcone skeleton. Then, a new type of chalcone isomerase, cfoK, catalyzes the conversion of the chalcone into a flavanone by a histidine-mediated oxa-Michael addition mechanism. The desaturation of flavanone to flavone is catalyzed by a new type of flavone synthase, the flavin mononucleotide (FMN)-dependent oxidoreductase cfoJ. Monooxygenases cfoF, cfoG, and P450 cfoH are responsible for the hydroxylation of the flavonoid skeleton at sites C3, C8, and C2', respectively. Like cfoF, the dehydratase cfoI plays also a role in the hydroxylation of position C3. Methyltransferases cfoB, cfoC, and cfoD then catalyze the methylation of C7-OH, C8-OH, and C3-OH, respectively. Finally, the monooxygenase cfoE is responsible for the chlorination of flavonoid at position C3'. This Aspergillus candidus protein is Dehydratase cfoI.